Here is a 198-residue protein sequence, read N- to C-terminus: tRNA (pseudouridine(54)-N(1))-methyltransferase (198 aa).

Position 128 (L128) interacts with S-adenosyl-L-methionine.

It belongs to the methyltransferase superfamily. TrmY family. As to quaternary structure, homodimer.

It localises to the cytoplasm. The catalysed reaction is pseudouridine(54) in tRNA + S-adenosyl-L-methionine = N(1)-methylpseudouridine(54) in tRNA + S-adenosyl-L-homocysteine + H(+). Its function is as follows. Specifically catalyzes the N1-methylation of pseudouridine at position 54 (Psi54) in tRNAs. The chain is tRNA (pseudouridine(54)-N(1))-methyltransferase from Haloarcula marismortui (strain ATCC 43049 / DSM 3752 / JCM 8966 / VKM B-1809) (Halobacterium marismortui).